We begin with the raw amino-acid sequence, 733 residues long: Serine/threonine-protein kinase ATG1c (733 aa).

The Protein kinase domain occupies 12 to 269 (YLVGRQIGSG…FEEFFNHPFL (258 aa)). ATP is bound by residues 18 to 26 (IGSGSFSVV) and lysine 41. The active-site Proton acceptor is the aspartate 134. Disordered regions lie at residues 292–363 (SSGS…ELTS) and 379–414 (FETQINSDRRNRREPTGLTDSRSLIAPGRVDDSQDS). A compositionally biased stretch (polar residues) spans 329–339 (KKTSSMKSSSG). Basic and acidic residues-rich tracts occupy residues 342 to 360 (VDTRIERKEVESSPLKHTE) and 379 to 393 (FETQINSDRRNRREP). Residues 419 to 422 (FVLV) carry the AIM (Atg8-family-interacting motif) motif. 2 disordered regions span residues 565–596 (GSPSQDINKLRSSSLKHDTHSSNKVTDLSHDG) and 713–733 (HRRSSAGQMQGSSLAMMNRQS). The span at 566–577 (SPSQDINKLRSS) shows a compositional bias: polar residues. The segment covering 579–596 (LKHDTHSSNKVTDLSHDG) has biased composition (basic and acidic residues). The span at 717–733 (SAGQMQGSSLAMMNRQS) shows a compositional bias: polar residues.

The protein belongs to the protein kinase superfamily. Ser/Thr protein kinase family.

It is found in the cytoplasmic vesicle. It localises to the autophagosome. Its function is as follows. Serine/threonine protein kinase involved in autophagy. The ATG1-ATG13 protein kinase complex regulates downstream events required for autophagosome enclosure and/or vacuolar delivery. The polypeptide is Serine/threonine-protein kinase ATG1c (Arabidopsis thaliana (Mouse-ear cress)).